Reading from the N-terminus, the 471-residue chain is Putative multidrug resistance protein MdtD (471 aa).

The Periplasmic segment spans residues 1–11; sequence MTDLPDNTRWQ. The helical transmembrane segment at 12–32 threads the bilayer; the sequence is LWIVAFGFFMQSLDTTIVNTA. The Cytoplasmic portion of the chain corresponds to 33-48; sequence LPSMAQSLGESPLHMH. The helical transmembrane segment at 49 to 69 threads the bilayer; sequence MVIVSYVLTVAVMLPASGWLA. Over 70-76 the chain is Periplasmic; the sequence is DKVGVRN. The helical transmembrane segment at 77 to 97 threads the bilayer; it reads IFFTAIVLFTLGSLFCALSGT. Residues 98-101 lie on the Cytoplasmic side of the membrane; that stretch reads LNEL. A helical membrane pass occupies residues 102–124; it reads LLARALQGVGGAMMVPVGRLTVM. The Periplasmic segment spans residues 125–137; the sequence is KIVPREQYMAAMT. A helical membrane pass occupies residues 138–158; sequence FVTLPGQVGPLLGPALGGLLV. The Cytoplasmic portion of the chain corresponds to 159 to 164; the sequence is EYASWH. Residues 165-185 form a helical membrane-spanning segment; that stretch reads WIFLINIPVGIIGAIATLMLM. Residues 186 to 196 lie on the Periplasmic side of the membrane; the sequence is PNYTMQTRRFD. Residues 197–217 traverse the membrane as a helical segment; it reads LSGFLLLAIGMAVLTLALDGS. The Cytoplasmic segment spans residues 218 to 224; it reads KGTGLSP. The helical transmembrane segment at 225–245 threads the bilayer; the sequence is LAITGLVAVGVVALVLYLLHA. Over 246–262 the chain is Periplasmic; the sequence is RNNNRALFSLKLFRTRT. Residues 263 to 283 form a helical membrane-spanning segment; the sequence is FSLGLAGSFAGRIGSGMLPFM. Over 284–285 the chain is Cytoplasmic; sequence TP. Residues 286–306 traverse the membrane as a helical segment; sequence VFLQIGLGFSPFHAGLMMIPM. The Periplasmic segment spans residues 307 to 341; the sequence is VLGSMGMKRIVVQVVNRFGYRRVLVATTLGLSLVT. A helical transmembrane segment spans residues 342 to 362; that stretch reads LLFMTTALLGWYYVLPFVLFL. The Cytoplasmic segment spans residues 363-395; sequence QGMVNSTRFSSMNTLTLKDLPDNLASSGNSLLS. The chain crosses the membrane as a helical span at residues 396–416; that stretch reads MIMQLSMSIGVTIAGLLLGLF. The Periplasmic segment spans residues 417–430; that stretch reads GSQHVSVDSGTTQT. Residues 431–451 form a helical membrane-spanning segment; the sequence is VFMYTWLSMAFIIALPAFIFA. The Cytoplasmic portion of the chain corresponds to 452 to 471; that stretch reads RVPNDTHQNVAISRRKRSAQ.

Belongs to the major facilitator superfamily. TCR/Tet family.

The protein resides in the cell inner membrane. The protein is Putative multidrug resistance protein MdtD of Escherichia coli O17:K52:H18 (strain UMN026 / ExPEC).